A 499-amino-acid chain; its full sequence is MNQPAPAALLPPRRVRLKPWLVAQVNSCQYPGLQWVNGEKKLFYIPWRHATRHGPSHDGDNTIFKAWAKETGKYTEGVDEADPAKWKANLRCALNKSRDFRLIYDGPRDMPPQPYKVYEVCSNGPAPAESQPSEDNAEEEEEEELQKMLPGLSITEAVQPGPAMAPYSLPKEDVKWPPTLQPPVVLAPPAPGPNLLVPAPGNAADFGEVFSEVLPSSQPQPGSLSTSLAPTGEQLLPDLLISPHMLPLTDLEIKFQYRGRPPRALTISNPQSCRLLYSQLEATQEQVELFGPVSLEQVRFPSPEDIPSEKQRFYTNQLLDVLDRGLILQIQGQDLYAIRLCQCKVFWSGPCASAQGSHPNPIQREVKTKLFSLEDFLNELILFQKGQTNTPPPFEIFFCFGEEWPDCKPREKKLITVQVVPVAARMLLEMFSGELSWSADSIRLQISNPDLKDRMVEQFKELHHIWLSQQHLQPVAQTPAMPGLSAAQGPWPMHPVGMQ.

The Nuclear localization signal signature appears at 12 to 18 (PRRVRLK). The segment at residues 14 to 122 (RVRLKPWLVA…QPYKVYEVCS (109 aa)) is a DNA-binding region (IRF tryptophan pentad repeat). The disordered stretch occupies residues 121-142 (CSNGPAPAESQPSEDNAEEEEE). The Nuclear export signal motif lies at 145–155 (LQKMLPGLSIT). Phosphoserine; by TBK1 occurs at positions 153 and 294. Position 302 is a phosphoserine (Ser302). Glycyl lysine isopeptide (Lys-Gly) (interchain with G-Cter in ubiquitin) cross-links involve residues Lys412 and Lys413. Phosphoserine is present on residues Ser432, Ser436, Ser438, Ser441, and Ser447.

This sequence belongs to the IRF family. In terms of assembly, homodimer, when phosphorylated. Interacts with TASL (via pLxIS motif); interaction takes place downstream of TLR7, TLR8 or TLR9, leading to its activation. Interacts with MYD88 and TRAF6. In terms of processing, phosphorylation of serine and threonine residues by IKBKB in a C-terminal autoinhibitory region, stimulates dimerization, transport into the nucleus, assembly with the coactivator CBP/EP300 and initiation of transcription. 'Lys-63'-linked polyubiquitination by TRAF6 is required for activation.

It localises to the cytoplasm. The protein localises to the nucleus. Its activity is regulated as follows. Maintained as a monomer in an autoinhibited state. Phosphorylation and activation follow the following steps: innate adapter protein TASL recruits IRF5, thereby licensing IRF5 for phosphorylation by IKBKB. Phosphorylated IRF5 dissociates from the adapter proteins, dimerizes, and then enters the nucleus to induce IFNs. Its function is as follows. Transcription factor that plays a critical role in innate immunity by activating expression of type I interferon (IFN) IFNA and INFB and inflammatory cytokines downstream of endolysosomal toll-like receptors TLR7, TLR8 and TLR9. Regulates the transcription of type I IFN genes (IFN-alpha and IFN-beta) and IFN-stimulated genes (ISG) by binding to an interferon-stimulated response element (ISRE) in their promoters. Can efficiently activate both the IFN-beta (IFNB) and the IFN-alpha (IFNA) genes and mediate their induction downstream of the TLR-activated, MyD88-dependent pathway. This chain is Interferon regulatory factor 5, found in Bos taurus (Bovine).